The sequence spans 156 residues: Ribosomal RNA large subunit methyltransferase H (156 aa).

S-adenosyl-L-methionine is bound by residues Leu-73, Gly-104, and 123 to 128 (ISSMTL).

Belongs to the RNA methyltransferase RlmH family. Homodimer.

It localises to the cytoplasm. It catalyses the reaction pseudouridine(1915) in 23S rRNA + S-adenosyl-L-methionine = N(3)-methylpseudouridine(1915) in 23S rRNA + S-adenosyl-L-homocysteine + H(+). In terms of biological role, specifically methylates the pseudouridine at position 1915 (m3Psi1915) in 23S rRNA. The sequence is that of Ribosomal RNA large subunit methyltransferase H from Janthinobacterium sp. (strain Marseille) (Minibacterium massiliensis).